A 361-amino-acid polypeptide reads, in one-letter code: Probable cysteine protease RD19B (361 aa).

The N-terminal stretch at 1 to 24 is a signal peptide; sequence MDYHLRVLFSVSLIFVFVSVSVCG. Residues 25-131 constitute a propeptide, activation peptide; the sequence is DEDVLIRQVV…NQAPILPTQN (107 aa). Disulfide bonds link cysteine 153–cysteine 203 and cysteine 187–cysteine 237. The active site involves cysteine 156. A glycan (N-linked (GlcNAc...) asparagine) is linked at asparagine 250. Residues cysteine 293 and cysteine 347 are joined by a disulfide bond. Residues histidine 299 and asparagine 326 contribute to the active site.

Belongs to the peptidase C1 family.

It localises to the lytic vacuole. Probable thiol protease. The sequence is that of Probable cysteine protease RD19B from Arabidopsis thaliana (Mouse-ear cress).